We begin with the raw amino-acid sequence, 370 residues long: tRNA 2-selenouridine synthase (370 aa).

The region spanning 12-136 (FLEDVPMMDT…MRNFLLDTTR (125 aa)) is the Rhodanese domain. The active-site S-selanylcysteine intermediate is cysteine 95.

This sequence belongs to the SelU family. As to quaternary structure, monomer.

The catalysed reaction is 5-methylaminomethyl-2-thiouridine(34) in tRNA + selenophosphate + (2E)-geranyl diphosphate + H2O + H(+) = 5-methylaminomethyl-2-selenouridine(34) in tRNA + (2E)-thiogeraniol + phosphate + diphosphate. The enzyme catalyses 5-methylaminomethyl-2-thiouridine(34) in tRNA + (2E)-geranyl diphosphate = 5-methylaminomethyl-S-(2E)-geranyl-thiouridine(34) in tRNA + diphosphate. It catalyses the reaction 5-methylaminomethyl-S-(2E)-geranyl-thiouridine(34) in tRNA + selenophosphate + H(+) = 5-methylaminomethyl-2-(Se-phospho)selenouridine(34) in tRNA + (2E)-thiogeraniol. It carries out the reaction 5-methylaminomethyl-2-(Se-phospho)selenouridine(34) in tRNA + H2O = 5-methylaminomethyl-2-selenouridine(34) in tRNA + phosphate. Involved in the post-transcriptional modification of the uridine at the wobble position (U34) of tRNA(Lys), tRNA(Glu) and tRNA(Gln). Catalyzes the conversion of 2-thiouridine (S2U-RNA) to 2-selenouridine (Se2U-RNA). Acts in a two-step process involving geranylation of 2-thiouridine (S2U) to S-geranyl-2-thiouridine (geS2U) and subsequent selenation of the latter derivative to 2-selenouridine (Se2U) in the tRNA chain. The chain is tRNA 2-selenouridine synthase from Azotobacter vinelandii (strain DJ / ATCC BAA-1303).